The chain runs to 329 residues: RING finger protein 225 (329 aa).

Residues 1-55 are disordered; sequence MPCPRPFWLRHSRAPQGSGPSSPGSLSAPRSPSRGEDQEEEEEEEGDGSPGSGPI. Over residues 14–32 the composition is skewed to low complexity; sequence APQGSGPSSPGSLSAPRSP. The span at 37–47 shows a compositional bias: acidic residues; sequence DQEEEEEEEGD. An RING-type zinc finger spans residues 64 to 112; the sequence is CLICVSSFDGVFKLPKRLDCGHVFCLECLARLSLATAGGGNAVACPVCR. Residues 122–181 are disordered; sequence GLPALPTQSGLLPRDARAPPSRQGSVRFDRRRGLLYLRPPPPPPGPRKARAPPPPPPLRL. A compositionally biased stretch (pro residues) spans 159–179; sequence RPPPPPPGPRKARAPPPPPPL. Residues 203–223 traverse the membrane as a helical segment; sequence ALAVLVAAGLVVSGVYIFFLI. Residues 248-329 form a disordered region; the sequence is FPPRPPPGSP…RGARRLWGSQ (82 aa). A compositionally biased stretch (acidic residues) spans 281–293; that stretch reads DALEPEAGPEDPA. Residues 294-304 show a composition bias toward basic and acidic residues; that stretch reads EAERTLDRRSD.

The protein localises to the membrane. This is RING finger protein 225 from Homo sapiens (Human).